Here is a 350-residue protein sequence, read N- to C-terminus: Neurogenic differentiation factor 1 (350 aa).

The tract at residues 1-91 is disordered; the sequence is MTKSYSEESM…KKKKMTKARM (91 aa). Positions 7-18 are enriched in low complexity; the sequence is EESMMLESQSSS. Residues 22–38 are compositionally biased toward basic and acidic residues; that stretch reads DKCHSSSQDERDVDKTS. The segment covering 44-72 has biased composition (acidic residues); sequence DMEDDDDAGLNRLEDEDDEEEEEEEEDGD. Residues 76–91 are compositionally biased toward basic residues; the sequence is PKRRGPKKKKMTKARM. Residues 82 to 88 carry the Nuclear localization signal motif; the sequence is KKKKMTK. The region spanning 96 to 148 is the bHLH domain; that stretch reads MRRMKANARERNRMHGLNDALESLRKVVPCYSKTQKLSKIETLRLAKNYIWAL.

In terms of assembly, efficient DNA binding requires dimerization with another bHLH protein. As to expression, in the embryo, expressed broadly in a subset of primary neurons in the brain and spinal cord. At 28 hours post-fertilization (hpf), regions of expression include telencephalon, olfactory placode, epiphysis, cranial ganglia, acoustic ganglia, Rohon-Beard mechano-sensory neurons and motoneurons. In 2 day postembryonic brain, expressed in many brain regions but absent from subpallium, the ventral preoptic region, ventral thalamus and hypothalamus; sites of expression extend laterally from the ventricular proliferative regions and correspond to freshly determined cell populations. In adult, expressed in all tissues examined with highest levels in brain.

Its subcellular location is the cytoplasm. It localises to the nucleus. Functionally, may act as a transcriptional activator. Differentiation factor required for neurogenesis. Acts as an upstream activator of isl1. The sequence is that of Neurogenic differentiation factor 1 from Danio rerio (Zebrafish).